A 187-amino-acid chain; its full sequence is Protein lethal(2)essential for life (187 aa).

Residues 61–170 (NSLQKQESGS…TERLVQITQT (110 aa)) form the sHSP domain. Residues 151-187 (APMKALPPPQTERLVQITQTGPSSKEDNAKKVETSTA) form a disordered region. Positions 174–187 (SKEDNAKKVETSTA) are enriched in basic and acidic residues.

It belongs to the small heat shock protein (HSP20) family. In terms of tissue distribution, ubiquitously expressed during embryogenesis with no sign of tissue specificity in expression up to stage 16.

Its function is as follows. Vital role in embryonic development. The chain is Protein lethal(2)essential for life (l(2)efl) from Drosophila melanogaster (Fruit fly).